We begin with the raw amino-acid sequence, 151 residues long: Dehydrin Rab16D (151 aa).

The interval 1 to 138 is disordered; it reads MEYQGQHGGH…TADAGGEKKG (138 aa). Over residues 39–51 the composition is skewed to basic and acidic residues; that stretch reads EPAREDKKTDGVL. Low complexity-rich tracts occupy residues 90 to 105 and 117 to 132; these read GNNQ…TTTG and IATG…TADA.

It belongs to the plant dehydrin family.

The sequence is that of Dehydrin Rab16D (RAB16D) from Oryza sativa subsp. indica (Rice).